A 344-amino-acid polypeptide reads, in one-letter code: tRNA N6-adenosine threonylcarbamoyltransferase (344 aa).

The Fe cation site is built by H112 and H116. Residues 134-138 (LASGG), D167, G180, and N280 contribute to the substrate site. D308 lines the Fe cation pocket.

The protein belongs to the KAE1 / TsaD family. Fe(2+) is required as a cofactor.

Its subcellular location is the cytoplasm. It catalyses the reaction L-threonylcarbamoyladenylate + adenosine(37) in tRNA = N(6)-L-threonylcarbamoyladenosine(37) in tRNA + AMP + H(+). In terms of biological role, required for the formation of a threonylcarbamoyl group on adenosine at position 37 (t(6)A37) in tRNAs that read codons beginning with adenine. Is involved in the transfer of the threonylcarbamoyl moiety of threonylcarbamoyl-AMP (TC-AMP) to the N6 group of A37, together with TsaE and TsaB. TsaD likely plays a direct catalytic role in this reaction. This chain is tRNA N6-adenosine threonylcarbamoyltransferase, found in Rickettsia rickettsii (strain Iowa).